Reading from the N-terminus, the 253-residue chain is 3-deoxy-manno-octulosonate cytidylyltransferase (253 aa).

Belongs to the KdsB family.

It localises to the cytoplasm. It carries out the reaction 3-deoxy-alpha-D-manno-oct-2-ulosonate + CTP = CMP-3-deoxy-beta-D-manno-octulosonate + diphosphate. The protein operates within nucleotide-sugar biosynthesis; CMP-3-deoxy-D-manno-octulosonate biosynthesis; CMP-3-deoxy-D-manno-octulosonate from 3-deoxy-D-manno-octulosonate and CTP: step 1/1. It functions in the pathway bacterial outer membrane biogenesis; lipopolysaccharide biosynthesis. Activates KDO (a required 8-carbon sugar) for incorporation into bacterial lipopolysaccharide in Gram-negative bacteria. In Neisseria meningitidis serogroup A / serotype 4A (strain DSM 15465 / Z2491), this protein is 3-deoxy-manno-octulosonate cytidylyltransferase.